A 1358-amino-acid chain; its full sequence is Tenascin-R (1358 aa).

The signal sequence occupies residues 1–31; sequence MGIDGETVVLKNMLIGVNLILLGSMLKPSEC. Residues 37 to 58 are disordered; that stretch reads TERAQRQTVEEEGGASSYNTSS. The N-linked (GlcNAc...) asparagine glycan is linked to Asn-55. The stretch at 127–157 forms a coiled coil; that stretch reads CASSSQVLQELLSRIEMLEREVSLLRDQCNT. Residue Ser-176 is glycosylated (O-linked (Xyl...) (chondroitin sulfate) serine). N-linked (GlcNAc...) asparagine glycans are attached at residues Asn-180 and Asn-198. 3 consecutive EGF-like domains span residues 188-199, 219-230, and 250-261; these read CICNEGWFGKNC, CICDSEYSGDDC, and CVCEEPYTGEDC. O-linked (Xyl...) (chondroitin sulfate) serine glycosylation occurs at Ser-271. N-linked (GlcNAc...) asparagine glycosylation is present at Asn-278. In terms of domain architecture, EGF-like 4 spans 281–292; the sequence is CLCQEGYAGEDC. Intrachain disulfides connect Cys-297-Cys-307 and Cys-314-Cys-323. Ser-302 carries an O-linked (Xyl...) (chondroitin sulfate) serine glycan. Residues 312 to 323 enclose the EGF-like 5 domain; that stretch reads CICEEGYQGPDC. Fibronectin type-III domains are found at residues 328–420, 421–505, 506–597, 598–687, 688–777, 778–865, 866–955, 956–1042, and 1043–1131; these read PPED…TPQG, LQFK…TVID, GPTQ…IDAP, KNLR…TELD, SPRD…FRPI, SHLH…TGID, PPKN…AMDS, PMDL…TLLD, and PPDN…GGRV. Residues Asn-392, Asn-470, and Asn-581 are each glycosylated (N-linked (GlcNAc...) asparagine). Position 724 is a phosphoserine (Ser-724). Asn-791, Asn-869, Asn-874, Asn-1036, Asn-1046, and Asn-1261 each carry an N-linked (GlcNAc...) asparagine glycan. The region spanning 1129 to 1344 is the Fibrinogen C-terminal domain; that stretch reads GRVFSHPQDC…FVEMKMRPYI (216 aa).

The protein belongs to the tenascin family. In terms of assembly, interacts with BCAN and ACAN in a calcium-dependent manner. Interacts with SCN2B, PTPRZ1, and CSPG3. Forms oligomers. Isoforms 1 and 2 form respectively trimeric (tribrachion) and dimeric kink-armed rodlike structures, which are linked by disulfide bridges. Interacts with CNTN1, TNC and FN1. Contains N-linked oligosaccharides with a sulfated carbohydrate structures. Contains N-linked oligosaccharides, O-linked sialylated structures and O-linked chondroitin sulfate glycosaminoglycans. In terms of tissue distribution, brain-specific.

The protein resides in the secreted. It localises to the extracellular space. Its subcellular location is the extracellular matrix. Its function is as follows. Neural extracellular matrix (ECM) protein involved in interactions with different cells and matrix components. Theses interactions can influence cellular behavior by either evoking a stable adhesion and differentiation, or repulsion and inhibition of neurite growth. Binding to cell surface gangliosides inhibits RGD-dependent integrin-mediated cell adhesion and results in an inhibition of PTK2/FAK1 (FAK) phosphorylation and cell detachment. Binding to membrane surface sulfatides results in a oligodendrocyte adhesion and differentiation. Interaction with CNTN1 induces a repulsion of neurons and an inhibition of neurite outgrowth. Interacts with SCN2B may play a crucial role in clustering and regulation of activity of sodium channels at nodes of Ranvier. TNR-linked chondroitin sulfate glycosaminoglycans are involved in the interaction with FN1 and mediates inhibition of cell adhesion and neurite outgrowth. The highly regulated addition of sulfated carbohydrate structure may modulate the adhesive properties of TNR over the course of development and during synapse maintenance. The protein is Tenascin-R (Tnr) of Mus musculus (Mouse).